A 380-amino-acid chain; its full sequence is Tryptophan 2,3-dioxygenase (380 aa).

Substrate-binding positions include 57-61 and Arg-128; that span reads FIITH. A heme-binding site is contributed by His-313. Position 328 (Thr-328) interacts with substrate.

It belongs to the tryptophan 2,3-dioxygenase family. As to quaternary structure, homotetramer. Dimer of dimers. The cofactor is heme.

The enzyme catalyses L-tryptophan + O2 = N-formyl-L-kynurenine. Its pathway is amino-acid degradation; L-tryptophan degradation via kynurenine pathway; L-kynurenine from L-tryptophan: step 1/2. The protein operates within pigment biosynthesis; ommochrome biosynthesis. Heme-dependent dioxygenase that catalyzes the oxidative cleavage of the L-tryptophan (L-Trp) pyrrole ring and converts L-tryptophan to N-formyl-L-kynurenine. Catalyzes the oxidative cleavage of the indole moiety. The sequence is that of Tryptophan 2,3-dioxygenase from Drosophila virilis (Fruit fly).